A 143-amino-acid chain; its full sequence is Putative pre-16S rRNA nuclease (143 aa).

The protein belongs to the YqgF nuclease family.

It is found in the cytoplasm. Functionally, could be a nuclease involved in processing of the 5'-end of pre-16S rRNA. The polypeptide is Putative pre-16S rRNA nuclease (Mesomycoplasma hyopneumoniae (strain 232) (Mycoplasma hyopneumoniae)).